The sequence spans 198 residues: Ribosome maturation factor RimM (198 aa).

Residues 92-168 enclose the PRC barrel domain; that stretch reads DDEYYHADLI…IELPAEIEGE (77 aa). The span at 163-172 shows a compositional bias: acidic residues; that stretch reads AEIEGEDQDS. Residues 163–198 form a disordered region; sequence AEIEGEDQDSSDNAGSPEGDAAASNSARHPRESGDP.

The protein belongs to the RimM family. As to quaternary structure, binds ribosomal protein uS19.

The protein resides in the cytoplasm. An accessory protein needed during the final step in the assembly of 30S ribosomal subunit, possibly for assembly of the head region. Essential for efficient processing of 16S rRNA. May be needed both before and after RbfA during the maturation of 16S rRNA. It has affinity for free ribosomal 30S subunits but not for 70S ribosomes. This chain is Ribosome maturation factor RimM, found in Bradyrhizobium sp. (strain BTAi1 / ATCC BAA-1182).